The primary structure comprises 710 residues: Polyribonucleotide nucleotidyltransferase (710 aa).

2 residues coordinate Mg(2+): Asp489 and Asp495. In terms of domain architecture, KH spans 556–615 (PKIDTIKIDVDKIKVVIGKGGETIDKIIAETGVKIDIDDEGNVSIYSSDQAAINRTKEII). The 69-residue stretch at 625–693 (GEVYHAKVVR…EKGRVDASMK (69 aa)) folds into the S1 motif domain. A disordered region spans residues 691–710 (SMKALIPRPPKPEKKEEKHD). A compositionally biased stretch (basic and acidic residues) spans 700–710 (PKPEKKEEKHD).

Mg(2+) is required as a cofactor.

The protein localises to the cytoplasm. The catalysed reaction is RNA(n+1) + phosphate = RNA(n) + a ribonucleoside 5'-diphosphate. Involved in mRNA degradation. Catalyzes the phosphorolysis of single-stranded polyribonucleotides processively in the 3'- to 5'-direction. This Streptococcus pyogenes serotype M6 (strain ATCC BAA-946 / MGAS10394) protein is Polyribonucleotide nucleotidyltransferase.